The chain runs to 725 residues: Prolyl 3-hydroxylase 1 (725 aa).

Positions 1–14 (MALLLPLLPLLVWA) are cleaved as a signal peptide. The stretch at 36–69 (PDALFAAGAEAYARGDWPAVVLQMERALRARAAI) is one TPR 1 repeat. The N-linked (GlcNAc...) asparagine glycan is linked to Asn-82. TPR repeat units lie at residues 136–169 (RSPY…NPEH), 198–231 (HMTE…YFVA), and 294–327 (PSHF…FPND). Positions 394-441 (KRLREKQKVERETAARISEEIGNLMKEIETLVEEKAKESAEMSKFIRE) form a coiled coil. Residues Asn-460 and Asn-533 are each glycosylated (N-linked (GlcNAc...) asparagine). One can recognise a Fe2OG dioxygenase domain in the interval 557–671 (SHLVCRTAID…RCAIALWFTL (115 aa)). Residues His-580, Asp-582, and His-652 each contribute to the Fe cation site. Arg-662 is a catalytic residue. The segment covering 701–715 (ETSAEQEPTAATSTA) has biased composition (polar residues). The segment at 701-725 (ETSAEQEPTAATSTAGLHAAGKDEL) is disordered. Residues 722-725 (KDEL) carry the Prevents secretion from ER motif.

This sequence belongs to the leprecan family. In terms of assembly, binds unfolded collagen in a complex with CYPB and CRTAP. Fe cation serves as cofactor. It depends on L-ascorbate as a cofactor. In terms of tissue distribution, expressed in embryonic dermis, tendon, cartilage, liver and kidney. Expression in the kidney is restricted to the calyx. In the liver, expression is restricted to the interlobular septum.

The protein localises to the endoplasmic reticulum. The catalysed reaction is L-prolyl-[collagen] + 2-oxoglutarate + O2 = trans-3-hydroxy-L-prolyl-[collagen] + succinate + CO2. In terms of biological role, has prolyl 3-hydroxylase activity catalyzing the post-translational formation of 3-hydroxyproline in -Xaa-Pro-Gly-sequences in collagens, especially types IV and V. May be involved in the secretoty pathway of cells. Has growth suppressive activity in fibroblasts. The polypeptide is Prolyl 3-hydroxylase 1 (Gallus gallus (Chicken)).